The primary structure comprises 317 residues: tRNA dimethylallyltransferase (317 aa).

19–26 (GPTASGKS) contacts ATP. 21–26 (TASGKS) is a binding site for substrate. Positions 44-47 (DSMQ) are interaction with substrate tRNA.

Belongs to the IPP transferase family. Monomer. Requires Mg(2+) as cofactor.

It catalyses the reaction adenosine(37) in tRNA + dimethylallyl diphosphate = N(6)-dimethylallyladenosine(37) in tRNA + diphosphate. Catalyzes the transfer of a dimethylallyl group onto the adenine at position 37 in tRNAs that read codons beginning with uridine, leading to the formation of N6-(dimethylallyl)adenosine (i(6)A). This Methylorubrum extorquens (strain PA1) (Methylobacterium extorquens) protein is tRNA dimethylallyltransferase.